Consider the following 138-residue polypeptide: Large ribosomal subunit protein uL16 (138 aa).

A disordered region spans residues 1-22; that stretch reads MQQPARTKYRKQQKGRNKGIAT. The span at 7–17 shows a compositional bias: basic residues; the sequence is TKYRKQQKGRN.

The protein belongs to the universal ribosomal protein uL16 family. As to quaternary structure, part of the 50S ribosomal subunit.

Functionally, binds 23S rRNA and is also seen to make contacts with the A and possibly P site tRNAs. The sequence is that of Large ribosomal subunit protein uL16 from Nitrosospira multiformis (strain ATCC 25196 / NCIMB 11849 / C 71).